Here is a 578-residue protein sequence, read N- to C-terminus: Alpha-(1,6)-fucosyltransferase (578 aa).

The Cytoplasmic portion of the chain corresponds to 1 to 9 (MRPWTGSWR). Residues 10–30 (WIMLILFAWGTLLFYIGGHLV) form a helical; Signal-anchor for type II membrane protein membrane-spanning segment. The Lumenal segment spans residues 31–578 (RDNENPDHSS…KYPTYQEAEK (548 aa)). 3 disulfides stabilise this stretch: cysteine 207–cysteine 269, cysteine 215–cysteine 233, and cysteine 221–cysteine 225. The region spanning 209-496 (KAKKLVCNIN…PDASAHFHSL (288 aa)) is the GT23 domain. Residues 302–308 (PRPPYLP) carry the SH3-binding motif. Residues 368 to 369 (RR) form an important for donor substrate binding region. Cysteine 468 and cysteine 475 are disulfide-bonded. An SH3 domain is found at 505-566 (QNAHNQLAIY…PSYKVKEKIE (62 aa)).

Belongs to the glycosyltransferase 23 family.

It localises to the golgi apparatus. Its subcellular location is the golgi stack membrane. The enzyme catalyses N(4)-{beta-D-GlcNAc-(1-&gt;2)-alpha-D-Man-(1-&gt;3)-[beta-D-GlcNAc-(1-&gt;2)-alpha-D-Man-(1-&gt;6)]-beta-D-Man-(1-&gt;4)-beta-D-GlcNAc-(1-&gt;4)-beta-D-GlcNAc}-L-asparaginyl-[protein] + GDP-beta-L-fucose = an N(4)-{beta-D-GlcNAc-(1-&gt;2)-alpha-D-Man-(1-&gt;3)-[beta-D-GlcNAc-(1-&gt;2)-alpha-D-Man-(1-&gt;6)]-beta-D-Man-(1-&gt;4)-beta-D-GlcNAc-(1-&gt;4)-[alpha-L-Fuc-(1-&gt;6)]-beta-D-GlcNAc}-L-asparaginyl-[protein] + GDP + H(+). It participates in protein modification; protein glycosylation. Functionally, catalyzes the addition of fucose in alpha 1-6 linkage to the first GlcNAc residue, next to the peptide chains in N-glycans. The polypeptide is Alpha-(1,6)-fucosyltransferase (fut8) (Xenopus tropicalis (Western clawed frog)).